The sequence spans 606 residues: Gamma-aminobutyric acid receptor subunit beta (606 aa).

An N-terminal signal peptide occupies residues 1–44 (MSDSKMDKLARMAPLPRTPLLTIWLAINMALIAQETGHKRIHTV). Residues 45-268 (QAATGGGSML…CEIQFVRSMG (224 aa)) lie on the Extracellular side of the membrane. Residue Asn-58 is glycosylated (N-linked (GlcNAc...) asparagine). An intrachain disulfide couples Cys-185 to Cys-199. N-linked (GlcNAc...) asparagine glycosylation occurs at Asn-253. Transmembrane regions (helical) follow at residues 269 to 291 (YYLI…SFWL), 297 to 316 (PARV…LMSS), and 333 to 356 (YLGT…YMAK). The Cytoplasmic portion of the chain corresponds to 357 to 568 (RIQMRKQRFM…LGITPSDIDK (212 aa)). Disordered stretches follow at residues 376–451 (KQQL…VSNR) and 482–542 (HDPK…AAVP). Residues 381-395 (GANQQQANPNPNANV) are compositionally biased toward low complexity. Over residues 396 to 425 (GGPGGVGVGPGGPGGPGGGVNVGVGMGMGP) the composition is skewed to gly residues. A compositionally biased stretch (basic residues) spans 430-443 (GHGHHAHSHGHPHA). Residues 499–536 (GGRGGPQSHGPGPGQGGGPPGGGGGGGGGGGPPEGGGD) are compositionally biased toward gly residues. The chain crosses the membrane as a helical span at residues 569-590 (YSRIVFPVCFVCFNLMYWIIYL).

This sequence belongs to the ligand-gated ion channel (TC 1.A.9) family. Gamma-aminobutyric acid receptor (TC 1.A.9.5) subfamily.

It is found in the postsynaptic cell membrane. The protein localises to the cell membrane. GABA, an inhibitory neurotransmitter, mediates neuronal inhibition by binding to the GABA receptor and opening an integral chloride channel. This chain is Gamma-aminobutyric acid receptor subunit beta (Rdl), found in Drosophila simulans (Fruit fly).